We begin with the raw amino-acid sequence, 419 residues long: Probable serine/threonine-protein kinase CST (419 aa).

Residue Gly-2 is the site of N-myristoyl glycine attachment. The S-palmitoyl cysteine moiety is linked to residue Cys-4. Residues 8–48 form a disordered region; the sequence is FSSSSPSKTGLHSHATTNNHSNGTEFSSTTGATTNSSVGQQ. Residues 15 to 48 show a composition bias toward polar residues; sequence KTGLHSHATTNNHSNGTEFSSTTGATTNSSVGQQ. The region spanning 86–368 is the Protein kinase domain; that stretch reads FKPDSMLGQG…KEVVEVLEHI (283 aa). Residue 92–100 participates in ATP binding; it reads LGQGGFGKV. Ser-117 bears the Phosphoserine mark. An ATP-binding site is contributed by Lys-124. Tyr-169 is modified (phosphotyrosine). The Proton acceptor role is filled by Asp-218. The residue at position 222 (Ser-222) is a Phosphoserine. Thr-253 and Thr-258 each carry phosphothreonine. Phosphotyrosine is present on Tyr-266. The span at 378–390 shows a compositional bias: polar residues; the sequence is SSTKQAVANSSRS. The tract at residues 378–419 is disordered; that stretch reads SSTKQAVANSSRSSPHHYRYKAGALGAERKRATPGRFGSVEK.

This sequence belongs to the protein kinase superfamily. Ser/Thr protein kinase family. Interacts with SOBIR1/EVR and RLK5/HAE. Post-translationally, autophosphorylated on serine, threonine and tyrosine residues.

It is found in the cell membrane. It localises to the nucleus. The catalysed reaction is L-seryl-[protein] + ATP = O-phospho-L-seryl-[protein] + ADP + H(+). It catalyses the reaction L-threonyl-[protein] + ATP = O-phospho-L-threonyl-[protein] + ADP + H(+). Its function is as follows. Acts as a spatial inhibitor of signaling that modulates abscission zone cell adhesion and expansion. Acts both directly and indirectly by physically interacting with RLK5/HAE and SOBIR1/EVR at the cell surface. The protein is Probable serine/threonine-protein kinase CST of Arabidopsis thaliana (Mouse-ear cress).